Reading from the N-terminus, the 56-residue chain is Large ribosomal subunit protein bL33 (56 aa).

Belongs to the bacterial ribosomal protein bL33 family.

This chain is Large ribosomal subunit protein bL33 (rpmG), found in Rickettsia prowazekii (strain Madrid E).